We begin with the raw amino-acid sequence, 248 residues long: Acetylglutamate kinase (248 aa).

Residues 36–37 (GG), Arg-58, and Asn-147 contribute to the substrate site.

It belongs to the acetylglutamate kinase family. ArgB subfamily.

Its subcellular location is the cytoplasm. It catalyses the reaction N-acetyl-L-glutamate + ATP = N-acetyl-L-glutamyl 5-phosphate + ADP. It participates in amino-acid biosynthesis; L-arginine biosynthesis; N(2)-acetyl-L-ornithine from L-glutamate: step 2/4. Its function is as follows. Catalyzes the ATP-dependent phosphorylation of N-acetyl-L-glutamate. The sequence is that of Acetylglutamate kinase from Thermus thermophilus (strain ATCC BAA-163 / DSM 7039 / HB27).